The sequence spans 449 residues: Putative F-box/FBD/LRR-repeat protein At5g62970 (449 aa).

In terms of domain architecture, F-box spans 2–50 (DKISGFSDDELLVKILSFLPFKFAITTSVLSKQWKFLWMRVPKLEYDED). LRR repeat units follow at residues 27–52 (TTSV…EDSM), 81–107 (GHRM…RLKF), 158–185 (TLKL…HLER), 186–211 (VTYG…VVEL), 252–279 (YFKL…NITA), and 328–354 (IHNA…EFDE). The FBD domain occupies 368 to 418 (FWNQPNSVPQCLLSTLQTFEWSGYPGSVQGKDLATYILRKSRQLKIATISI).

This chain is Putative F-box/FBD/LRR-repeat protein At5g62970, found in Arabidopsis thaliana (Mouse-ear cress).